Reading from the N-terminus, the 220-residue chain is Deoxyribose-phosphate aldolase 1 (220 aa).

Catalysis depends on D89, which acts as the Proton donor/acceptor. Residue K151 is the Schiff-base intermediate with acetaldehyde of the active site. K180 serves as the catalytic Proton donor/acceptor.

This sequence belongs to the DeoC/FbaB aldolase family. DeoC type 1 subfamily.

The protein localises to the cytoplasm. It catalyses the reaction 2-deoxy-D-ribose 5-phosphate = D-glyceraldehyde 3-phosphate + acetaldehyde. The protein operates within carbohydrate degradation; 2-deoxy-D-ribose 1-phosphate degradation; D-glyceraldehyde 3-phosphate and acetaldehyde from 2-deoxy-alpha-D-ribose 1-phosphate: step 2/2. Catalyzes a reversible aldol reaction between acetaldehyde and D-glyceraldehyde 3-phosphate to generate 2-deoxy-D-ribose 5-phosphate. This is Deoxyribose-phosphate aldolase 1 from Mesoplasma florum (strain ATCC 33453 / NBRC 100688 / NCTC 11704 / L1) (Acholeplasma florum).